We begin with the raw amino-acid sequence, 213 residues long: Isomeliandiol synthase MOI2 (213 aa).

The next 5 membrane-spanning stretches (helical) occupy residues 18–38 (AALH…SWFI), 52–72 (VLCW…YYVF), 109–129 (IESM…YALA), 137–157 (ILQF…FLSA), and 171–191 (YWAY…LIAI). Residues 48 to 190 (MDRVVLCWWA…IWVIVPALIA (143 aa)) form the EXPERA domain.

This sequence belongs to the EBP family. As to expression, mainly expressed in petioles.

It localises to the membrane. It carries out the reaction 7,8-epoxymelianol = isomeliandiol. The protein operates within secondary metabolite biosynthesis; terpenoid biosynthesis. Its function is as follows. Isomerase involved in the biosynthesis of limonoids triterpene natural products such as azadirachtin, an antifeedant widely used as bioinsecticide, and possessing many medicinal applications including anti-tumoral, anti-malarial, anti-rheumatic, antibacterial, anti-inflammatory, anti-pyretic and diuretic effects. Catalyzes the conversion of 7,8-epoxymelianol to isomeliandiol via skeletal rearrangements. This chain is Isomeliandiol synthase MOI2, found in Melia azedarach (Chinaberry tree).